Here is a 209-residue protein sequence, read N- to C-terminus: U1 small nuclear ribonucleoprotein C (209 aa).

Residues 4-36 (HYCDYCDVFLTHDSASVRKAHNSGRNHLANVRD) form a Matrin-type zinc finger. Residues 72–87 (PQHLQAPPQGGFAPPM) are compositionally biased toward low complexity. Residues 72–209 (PQHLQAPPQG…RARMMGPGGR (138 aa)) are disordered. Pro residues-rich tracts occupy residues 93 to 150 (GGFP…PFPP) and 159 to 191 (PGAP…PTNP).

It belongs to the U1 small nuclear ribonucleoprotein C family. U1 snRNP is composed of the 7 core Sm proteins B/B', D1, D2, D3, E, F and G that assemble in a heptameric protein ring on the Sm site of the small nuclear RNA to form the core snRNP, and at least 3 U1 snRNP-specific proteins U1-70K, U1-A and U1-C. U1-C interacts with U1 snRNA and the 5' splice-site region of the pre-mRNA.

It localises to the nucleus. Component of the spliceosomal U1 snRNP, which is essential for recognition of the pre-mRNA 5' splice-site and the subsequent assembly of the spliceosome. U1-C is directly involved in initial 5' splice-site recognition for both constitutive and regulated alternative splicing. The interaction with the 5' splice-site seems to precede base-pairing between the pre-mRNA and the U1 snRNA. Stimulates commitment or early (E) complex formation by stabilizing the base pairing of the 5' end of the U1 snRNA and the 5' splice-site region. This chain is U1 small nuclear ribonucleoprotein C, found in Coprinopsis cinerea (strain Okayama-7 / 130 / ATCC MYA-4618 / FGSC 9003) (Inky cap fungus).